A 261-amino-acid chain; its full sequence is Cytochrome c oxidase subunit 3 (261 aa).

The Mitochondrial matrix segment spans residues 1–15 (MTHQTHAYHMVNPSP). A helical transmembrane segment spans residues 16–34 (WPLTGALSALLMTSGLTMW). Residues 35–40 (FHFNSM) are Mitochondrial intermembrane-facing. A helical transmembrane segment spans residues 41–66 (TLLMIGLTTNMLTMYQWWRDVIREST). Topologically, residues 67-72 (FQGHHT) are mitochondrial matrix. The helical transmembrane segment at 73–105 (PAVQKGLRYGMILFIISEVLFFTGFFWAFYHSS) threads the bilayer. The Mitochondrial intermembrane segment spans residues 106 to 128 (LAPTPELGGCWPPTGIHPLNPLE). The chain crosses the membrane as a helical span at residues 129 to 152 (VPLLNTSVLLASGVSITWAHHSLM). At 153-155 (EGD) the chain is on the mitochondrial matrix side. A helical transmembrane segment spans residues 156 to 183 (RKHMLQALFITITLGVYFTLLQASEYYE). The Mitochondrial intermembrane segment spans residues 184–190 (APFTISD). The helical transmembrane segment at 191–223 (GVYGSTFFVATGFHGLHVIIGSTFLIVCFFRQL) threads the bilayer. Residues 224–232 (KFHFTSNHH) are Mitochondrial matrix-facing. The chain crosses the membrane as a helical span at residues 233-256 (FGFEAAAWYWHFVDVVWLFLYVSI). The Mitochondrial intermembrane portion of the chain corresponds to 257–261 (YWWGS).

This sequence belongs to the cytochrome c oxidase subunit 3 family. As to quaternary structure, component of the cytochrome c oxidase (complex IV, CIV), a multisubunit enzyme composed of 14 subunits. The complex is composed of a catalytic core of 3 subunits MT-CO1, MT-CO2 and MT-CO3, encoded in the mitochondrial DNA, and 11 supernumerary subunits COX4I1 (or COX4I2), COX5A, COX5B, COX6A2 (or COX6A1), COX6B1 (or COX6B2), COX6C, COX7A1 (or COX7A2), COX7B, COX7C, COX8B and NDUFA4, which are encoded in the nuclear genome. The complex exists as a monomer or a dimer and forms supercomplexes (SCs) in the inner mitochondrial membrane with NADH-ubiquinone oxidoreductase (complex I, CI) and ubiquinol-cytochrome c oxidoreductase (cytochrome b-c1 complex, complex III, CIII), resulting in different assemblies (supercomplex SCI(1)III(2)IV(1) and megacomplex MCI(2)III(2)IV(2)).

The protein localises to the mitochondrion inner membrane. The enzyme catalyses 4 Fe(II)-[cytochrome c] + O2 + 8 H(+)(in) = 4 Fe(III)-[cytochrome c] + 2 H2O + 4 H(+)(out). Component of the cytochrome c oxidase, the last enzyme in the mitochondrial electron transport chain which drives oxidative phosphorylation. The respiratory chain contains 3 multisubunit complexes succinate dehydrogenase (complex II, CII), ubiquinol-cytochrome c oxidoreductase (cytochrome b-c1 complex, complex III, CIII) and cytochrome c oxidase (complex IV, CIV), that cooperate to transfer electrons derived from NADH and succinate to molecular oxygen, creating an electrochemical gradient over the inner membrane that drives transmembrane transport and the ATP synthase. Cytochrome c oxidase is the component of the respiratory chain that catalyzes the reduction of oxygen to water. Electrons originating from reduced cytochrome c in the intermembrane space (IMS) are transferred via the dinuclear copper A center (CU(A)) of subunit 2 and heme A of subunit 1 to the active site in subunit 1, a binuclear center (BNC) formed by heme A3 and copper B (CU(B)). The BNC reduces molecular oxygen to 2 water molecules using 4 electrons from cytochrome c in the IMS and 4 protons from the mitochondrial matrix. The chain is Cytochrome c oxidase subunit 3 (MT-CO3) from Bos taurus (Bovine).